The primary structure comprises 176 residues: CASP-like protein 5A1 (176 aa).

Over 1 to 45 the chain is Cytoplasmic; the sequence is MDASHPAVYPVGVPPTAVDPPPRVRMKDYEGMPSTLGGLVLRSGQ. The helical transmembrane segment at 46–66 threads the bilayer; that stretch reads FACAVTALSIMISIPDFSSVT. Position 67 (Ala67) is a topological domain, extracellular. The helical transmembrane segment at 68–88 threads the bilayer; that stretch reads FCYLVAAMALQLLWSVSLAVV. Residues 89 to 102 lie on the Cytoplasmic side of the membrane; it reads DGYALLLRRTLHNP. Residues 103 to 123 form a helical membrane-spanning segment; sequence VLLSLLVIGDWVTSTLSLAAA. Topologically, residues 124–151 are extracellular; it reads CSSAGITVLIDSDLAQCAHNHCGRYEAA. Residues 152 to 172 form a helical membrane-spanning segment; it reads VAMAFLTWFLVSLSFFFSFWL. Topologically, residues 173 to 176 are cytoplasmic; that stretch reads LATR.

This sequence belongs to the Casparian strip membrane proteins (CASP) family. In terms of assembly, homodimer and heterodimers.

The protein localises to the cell membrane. This is CASP-like protein 5A1 from Selaginella moellendorffii (Spikemoss).